A 504-amino-acid polypeptide reads, in one-letter code: Ent-kaurene oxidase-like 3 (504 aa).

A helical transmembrane segment spans residues Ser-3 to Ile-23. Heme is bound at residue Cys-448.

This sequence belongs to the cytochrome P450 family. It depends on heme as a cofactor. As to expression, expressed in leaf blades.

The protein localises to the membrane. Functionally, may hydroxylate diterpenes. This chain is Ent-kaurene oxidase-like 3, found in Oryza sativa subsp. japonica (Rice).